The sequence spans 287 residues: tRNA pseudouridine synthase B (287 aa).

Aspartate 38 serves as the catalytic Nucleophile.

Belongs to the pseudouridine synthase TruB family. Type 1 subfamily.

The catalysed reaction is uridine(55) in tRNA = pseudouridine(55) in tRNA. Responsible for synthesis of pseudouridine from uracil-55 in the psi GC loop of transfer RNAs. The chain is tRNA pseudouridine synthase B from Fusobacterium nucleatum subsp. nucleatum (strain ATCC 25586 / DSM 15643 / BCRC 10681 / CIP 101130 / JCM 8532 / KCTC 2640 / LMG 13131 / VPI 4355).